Consider the following 503-residue polypeptide: L-amino-acid oxidase (503 aa).

The N-terminal stretch at Met1–Cys18 is a signal peptide. Residues Cys28 and Cys191 are joined by a disulfide bond. FAD is bound by residues Met61–Ser62, Glu81–Ala82, Arg89, and Gly105–Arg108. Arg108 is a substrate binding site. N-linked (GlcNAc...) asparagine glycosylation is present at Asn190. Position 241 (His241) interacts with substrate. An FAD-binding site is contributed by Val279. Cys349 and Cys430 are disulfide-bonded. Tyr390 contacts substrate. FAD is bound by residues Glu475 and Gly482 to Thr487. Gly482–Trp483 contributes to the substrate binding site.

This sequence belongs to the flavin monoamine oxidase family. FIG1 subfamily. As to quaternary structure, homodimer; non-covalently linked. FAD serves as cofactor. N-glycosylated. The enzymatic activity is not affected by deglycosylation. Expressed by the venom gland.

The protein localises to the secreted. It carries out the reaction an L-alpha-amino acid + O2 + H2O = a 2-oxocarboxylate + H2O2 + NH4(+). It catalyses the reaction L-leucine + O2 + H2O = 4-methyl-2-oxopentanoate + H2O2 + NH4(+). The catalysed reaction is L-phenylalanine + O2 + H2O = 3-phenylpyruvate + H2O2 + NH4(+). The enzyme catalyses L-methionine + O2 + H2O = 4-methylsulfanyl-2-oxobutanoate + H2O2 + NH4(+). It carries out the reaction L-isoleucine + O2 + H2O = (S)-3-methyl-2-oxopentanoate + H2O2 + NH4(+). In terms of biological role, catalyzes an oxidative deamination of predominantly hydrophobic and aromatic L-amino acids, thus producing hydrogen peroxide that may contribute to the diverse toxic effects of this enzyme. Is highly active on L-Met, L-Leu, L-Phe and L-Ile. Exhibits diverse biological activities, such as antibacterial on both Gram-positive and Gram-negative bacteria and antiparasitic activities, as well as induction of platelet aggregation. Effects of snake L-amino oxidases on platelets are controversial, since they either induce aggregation or inhibit agonist-induced aggregation. These different effects are probably due to different experimental conditions. This protein may also have activities in hemorrhage, hemolysis, edema, and apoptosis. In Bothrops pauloensis (Neuwied's lancehead), this protein is L-amino-acid oxidase.